The primary structure comprises 508 residues: Aldehyde dehydrogenase family 7 member B4 (508 aa).

244 to 249 (GSSRVG) provides a ligand contact to NAD(+). Glutamate 266 acts as the Proton acceptor in catalysis. Cysteine 300 functions as the Nucleophile in the catalytic mechanism.

This sequence belongs to the aldehyde dehydrogenase family. Homotetramer.

It carries out the reaction an aldehyde + NAD(+) + H2O = a carboxylate + NADH + 2 H(+). In Arabidopsis thaliana (Mouse-ear cress), this protein is Aldehyde dehydrogenase family 7 member B4 (ALDH7B4).